Consider the following 186-residue polypeptide: MYIIAGLGNPGKEYMGTRHNAGFSVIDELADKYNISVDTAKHKGLIGKGVIAGQKVILVKPMTYMNNSGECIREVMDYYKCDIDDFLVIFDDISLDVGKLRLRAKGSAGGHNGIKSIIAHLGSDKFKRIKFGVGDKPKNWDLADWVLGKFPAEEYATLREANKKACEAVECILTDGIESGMNKYNG.

Y14 contacts tRNA. H19 serves as the catalytic Proton acceptor. TRNA-binding residues include Y64, N66, and N112.

The protein belongs to the PTH family. Monomer.

The protein resides in the cytoplasm. The catalysed reaction is an N-acyl-L-alpha-aminoacyl-tRNA + H2O = an N-acyl-L-amino acid + a tRNA + H(+). Functionally, hydrolyzes ribosome-free peptidyl-tRNAs (with 1 or more amino acids incorporated), which drop off the ribosome during protein synthesis, or as a result of ribosome stalling. In terms of biological role, catalyzes the release of premature peptidyl moieties from peptidyl-tRNA molecules trapped in stalled 50S ribosomal subunits, and thus maintains levels of free tRNAs and 50S ribosomes. The sequence is that of Peptidyl-tRNA hydrolase from Lachnospira eligens (strain ATCC 27750 / DSM 3376 / VPI C15-48 / C15-B4) (Eubacterium eligens).